We begin with the raw amino-acid sequence, 298 residues long: Acetylglutamate kinase (298 aa).

Substrate-binding positions include 69–70, R91, and N191; that span reads GG.

It belongs to the acetylglutamate kinase family. ArgB subfamily.

It localises to the cytoplasm. It catalyses the reaction N-acetyl-L-glutamate + ATP = N-acetyl-L-glutamyl 5-phosphate + ADP. It participates in amino-acid biosynthesis; L-arginine biosynthesis; N(2)-acetyl-L-ornithine from L-glutamate: step 2/4. Its function is as follows. Catalyzes the ATP-dependent phosphorylation of N-acetyl-L-glutamate. In Neisseria meningitidis serogroup C (strain 053442), this protein is Acetylglutamate kinase.